We begin with the raw amino-acid sequence, 370 residues long: UDP-3-O-acylglucosamine N-acyltransferase (370 aa).

The active-site Proton acceptor is the histidine 252. The interval 350-370 is disordered; the sequence is AAGRQDGPAANAASSSAGDKA. Residues 358–370 are compositionally biased toward low complexity; it reads AANAASSSAGDKA.

Belongs to the transferase hexapeptide repeat family. LpxD subfamily. Homotrimer.

The catalysed reaction is a UDP-3-O-[(3R)-3-hydroxyacyl]-alpha-D-glucosamine + a (3R)-hydroxyacyl-[ACP] = a UDP-2-N,3-O-bis[(3R)-3-hydroxyacyl]-alpha-D-glucosamine + holo-[ACP] + H(+). It participates in bacterial outer membrane biogenesis; LPS lipid A biosynthesis. Its function is as follows. Catalyzes the N-acylation of UDP-3-O-acylglucosamine using 3-hydroxyacyl-ACP as the acyl donor. Is involved in the biosynthesis of lipid A, a phosphorylated glycolipid that anchors the lipopolysaccharide to the outer membrane of the cell. The protein is UDP-3-O-acylglucosamine N-acyltransferase of Paraburkholderia xenovorans (strain LB400).